Here is a 147-residue protein sequence, read N- to C-terminus: uncharacterized protein (147 aa).

Disordered regions lie at residues 1–49 (MRTP…NLNE) and 125–147 (SPSP…RKSN). Low complexity-rich tracts occupy residues 8 to 49 (NNNY…NLNE) and 125 to 140 (SPSP…PQNT).

This is an uncharacterized protein from Dictyostelium discoideum (Social amoeba).